The sequence spans 518 residues: Serine/threonine-protein kinase UL13 (518 aa).

Disordered regions lie at residues 1–22 and 39–120; these read MDES…PQGA and SRRA…PSPP. Positions 44 to 61 are enriched in low complexity; sequence GRPSGPSPRDGAVSGARP. The 368-residue stretch at 151–518 folds into the Protein kinase domain; sequence PGARSFGGSG…ANPAARHSLS (368 aa). ATP contacts are provided by residues 157 to 165 and Lys176; that span reads GGSGGYGEV. The active-site Proton acceptor is Asp277.

This sequence belongs to the protein kinase superfamily. Ser/Thr protein kinase family. In terms of processing, autophosphorylated.

It is found in the virion tegument. The protein localises to the host nucleus. The enzyme catalyses L-seryl-[protein] + ATP = O-phospho-L-seryl-[protein] + ADP + H(+). It catalyses the reaction L-threonyl-[protein] + ATP = O-phospho-L-threonyl-[protein] + ADP + H(+). Its function is as follows. Multifunctional serine/threonine kinase that plays a role in several processes including egress of virus particles from the nucleus, modulation of the actin cytoskeleton and regulation of viral and cellular gene expression. Regulates the nuclear localization of viral envelopment factors UL34 and UL31, by phosphorylating the US3 kinase, indicating a role in nuclear egress. Disrupts host nuclear lamins, including LMNA and LMNB1. Phosphorylates the viral Fc receptor composed of glycoproteins E (gE) and I (gI). Phosphorylation of glycoprotein E (gE) by UL13 alters its subcellular localization, from the host early endosome to the plasma membrane. Participates in the transcriptional regulation of cellular and viral mRNAs mainly by phosphorylating the viral transcriptional regulator ICP22. Additional substrates have been identified, including UL41, UL49 or host EF1D. The sequence is that of Serine/threonine-protein kinase UL13 from Homo sapiens (Human).